Consider the following 535-residue polypeptide: Growth-regulating factor 2 (535 aa).

The QLQ domain occupies 164-199 (PFTLTQWAELEQQALIYKYITANVPVPSSLLISIKK). A WRC domain is found at 227-271 (DPEPGRCRRTDGKKWRCSRDAVPDQKYCERHINRGRHRSRKPVEV). 2 consecutive short sequence motifs (bipartite nuclear localization signal) follow at residues 232-242 (RCRRTDGKKWR) and 260-267 (RGRHRSRK). Disordered regions lie at residues 260-308 (RGRH…ASSN), 417-437 (PIAS…EKTT), and 514-535 (SSVS…HYTT). Residues 272 to 291 (QSGQNQTAAAASKAVTTPQQ) are compositionally biased toward polar residues. Positions 299 to 308 (NRSNARASSN) are enriched in low complexity. Residues 426 to 437 (THNNNNAQEKTT) show a composition bias toward polar residues.

This sequence belongs to the GRF family. As to quaternary structure, interacts with GIF1. In terms of tissue distribution, strongly expressed in actively growing and developing tissues, such as roots, upper stems, and shoot tips containing the shoot apical meristem (SAM) and flower buds. Detected in young leaf primordium. Also expressed in mature flowers, but weakly expressed in mature stems and leaves.

Its subcellular location is the nucleus. Functionally, transcription activator that plays a role in the regulation of cell expansion in leaf and cotyledons tissues. Component of a network formed by miR396, the GRFs and their interacting factors (GIFs) acting in the regulation of meristem function, at least partially through the control of cell proliferation. The polypeptide is Growth-regulating factor 2 (GRF2) (Arabidopsis thaliana (Mouse-ear cress)).